The primary structure comprises 141 residues: Cell division protein SepF (141 aa).

This sequence belongs to the SepF family. In terms of assembly, homodimer. Interacts with FtsZ.

It localises to the cytoplasm. Functionally, cell division protein that is part of the divisome complex and is recruited early to the Z-ring. Probably stimulates Z-ring formation, perhaps through the cross-linking of FtsZ protofilaments. Its function overlaps with FtsA. The chain is Cell division protein SepF from Anoxybacillus flavithermus (strain DSM 21510 / WK1).